The sequence spans 87 residues: Exendin-3 (87 aa).

An N-terminal signal peptide occupies residues 1–21 (MKIILWLCVFGLFLATLFPVS). Residues 22–45 (WQMPVESGLSSEDSASSESFASKI) constitute a propeptide that is removed on maturation. A Serine amide modification is found at S86.

This sequence belongs to the glucagon family. In terms of tissue distribution, expressed by the venom gland.

The protein resides in the secreted. In terms of biological role, stimulates vasoactive intestinal peptide (VIP) receptors in high concentrations (&gt;100 nM), resulting in both an increase in cAMP and amylase secretion from pancreatic acini, although at low concentrations (between 0.3 and 3 nM) it increases cAMP without stimulating amylase release. Stimulates the GLP-1 receptor (GLP1R). Induces hypotension that is mediated by relaxation of cardiac smooth muscle. This is Exendin-3 from Heloderma horridum horridum (Mexican beaded lizard).